Consider the following 106-residue polypeptide: MNDSEFHQLADQLMLYIEETLDGFTGDSDIDYETNGGVMTLTFENGSKIVINRQEPLHQVWLATKAGGYHFNYRDGHWYCSRSGEEFLAKLSEAASAQAGENVSFG.

This sequence belongs to the frataxin family.

Involved in iron-sulfur (Fe-S) cluster assembly. May act as a regulator of Fe-S biogenesis. This Yersinia pseudotuberculosis serotype O:3 (strain YPIII) protein is Iron-sulfur cluster assembly protein CyaY.